Consider the following 166-residue polypeptide: Nascent polypeptide-associated complex subunit beta (166 aa).

Disordered regions lie at residues 1–40 and 129–166; these read MVLN…EDPK and HAAS…DKLD. The NAC-A/B domain maps to 35 to 100; that stretch reads GGEDPKLQAA…GVDKELTELV (66 aa). Residues 141–153 are compositionally biased toward acidic residues; it reads DDDDVPDVVENFD. The span at 154-166 shows a compositional bias: basic and acidic residues; that stretch reads EADKKETEVDKLD.

It belongs to the NAC-beta family. Part of the nascent polypeptide-associated complex (NAC), consisting of EGD2 and EGD1. NAC associates with ribosomes via EGD1.

The protein localises to the cytoplasm. It is found in the nucleus. Its function is as follows. Component of the nascent polypeptide-associated complex (NAC), a dynamic component of the ribosomal exit tunnel, protecting the emerging polypeptides from interaction with other cytoplasmic proteins to ensure appropriate nascent protein targeting. The NAC complex also promotes mitochondrial protein import by enhancing productive ribosome interactions with the outer mitochondrial membrane and blocks the inappropriate interaction of ribosomes translating non-secretory nascent polypeptides with translocation sites in the membrane of the endoplasmic reticulum. EGD1 may act as a transcription factor that exert a negative effect on the expression of several genes that are transcribed by RNA polymerase II. This chain is Nascent polypeptide-associated complex subunit beta (EGD1), found in Mycosarcoma maydis (Corn smut fungus).